Consider the following 525-residue polypeptide: Ent-kaurene oxidase (525 aa).

The chain crosses the membrane as a helical span at residues 31 to 51; it reads VHWLIYVAFGAWLCSYVIHVL. Cys-466 is a heme binding site.

It belongs to the cytochrome P450 family. The cofactor is heme.

Its subcellular location is the membrane. The catalysed reaction is ent-kaur-16-ene + 3 reduced [NADPH--hemoprotein reductase] + 3 O2 = ent-kaur-16-en-19-oate + 3 oxidized [NADPH--hemoprotein reductase] + 4 H2O + 4 H(+). Its pathway is plant hormone biosynthesis; gibberellin biosynthesis. Its function is as follows. Catalyzes three successive oxidations of the 4-methyl group of ent-kaurene giving kaurenoic acid, a key step in gibberellin (GA) biosynthesis. The chain is Ent-kaurene oxidase (CYP503A1) from Fusarium fujikuroi (Bakanae and foot rot disease fungus).